A 166-amino-acid chain; its full sequence is Orotate phosphoribosyltransferase (166 aa).

Residues R83, K84, R86, H88, and 108–116 (EDVVTTGNS) each bind 5-phospho-alpha-D-ribose 1-diphosphate. Residues T112 and R140 each coordinate orotate.

This sequence belongs to the purine/pyrimidine phosphoribosyltransferase family. PyrE subfamily. As to quaternary structure, homodimer. Requires Mg(2+) as cofactor.

The enzyme catalyses orotidine 5'-phosphate + diphosphate = orotate + 5-phospho-alpha-D-ribose 1-diphosphate. The protein operates within pyrimidine metabolism; UMP biosynthesis via de novo pathway; UMP from orotate: step 1/2. In terms of biological role, catalyzes the transfer of a ribosyl phosphate group from 5-phosphoribose 1-diphosphate to orotate, leading to the formation of orotidine monophosphate (OMP). This chain is Orotate phosphoribosyltransferase, found in Thermoplasma volcanium (strain ATCC 51530 / DSM 4299 / JCM 9571 / NBRC 15438 / GSS1).